Here is a 324-residue protein sequence, read N- to C-terminus: N-acetyl-gamma-glutamyl-phosphate reductase (324 aa).

Residue Cys131 is part of the active site.

This sequence belongs to the NAGSA dehydrogenase family. Type 1 subfamily.

It is found in the cytoplasm. It carries out the reaction N-acetyl-L-glutamate 5-semialdehyde + phosphate + NADP(+) = N-acetyl-L-glutamyl 5-phosphate + NADPH + H(+). Its pathway is amino-acid biosynthesis; L-arginine biosynthesis; N(2)-acetyl-L-ornithine from L-glutamate: step 3/4. Functionally, catalyzes the NADPH-dependent reduction of N-acetyl-5-glutamyl phosphate to yield N-acetyl-L-glutamate 5-semialdehyde. In Bradyrhizobium sp. (strain ORS 278), this protein is N-acetyl-gamma-glutamyl-phosphate reductase.